The chain runs to 279 residues: Formamidopyrimidine-DNA glycosylase (279 aa).

P2 serves as the catalytic Schiff-base intermediate with DNA. E3 functions as the Proton donor in the catalytic mechanism. K58 serves as the catalytic Proton donor; for beta-elimination activity. DNA contacts are provided by H92, R111, and R153. The FPG-type zinc-finger motif lies at 238–272 (TVYGKEGQSCLSCSSTIIKTKHSGRSTFYCKTCQY). Catalysis depends on R262, which acts as the Proton donor; for delta-elimination activity.

Belongs to the FPG family. In terms of assembly, monomer. Zn(2+) serves as cofactor.

The catalysed reaction is Hydrolysis of DNA containing ring-opened 7-methylguanine residues, releasing 2,6-diamino-4-hydroxy-5-(N-methyl)formamidopyrimidine.. The enzyme catalyses 2'-deoxyribonucleotide-(2'-deoxyribose 5'-phosphate)-2'-deoxyribonucleotide-DNA = a 3'-end 2'-deoxyribonucleotide-(2,3-dehydro-2,3-deoxyribose 5'-phosphate)-DNA + a 5'-end 5'-phospho-2'-deoxyribonucleoside-DNA + H(+). Functionally, involved in base excision repair of DNA damaged by oxidation or by mutagenic agents. Acts as a DNA glycosylase that recognizes and removes damaged bases. Has a preference for oxidized purines, such as 7,8-dihydro-8-oxoguanine (8-oxoG). Has AP (apurinic/apyrimidinic) lyase activity and introduces nicks in the DNA strand. Cleaves the DNA backbone by beta-delta elimination to generate a single-strand break at the site of the removed base with both 3'- and 5'-phosphates. In Rickettsia massiliae (strain Mtu5), this protein is Formamidopyrimidine-DNA glycosylase.